The sequence spans 173 residues: Glycine cleavage system H protein, mitochondrial (173 aa).

A mitochondrion-targeting transit peptide spans 1 to 48; that stretch reads MALRVVRSVRALLCTLRAVPSPAAPCPPRPWQLGVGAVRTLRTGPALL. The 83-residue stretch at 66-148 folds into the Lipoyl-binding domain; the sequence is IGTVGISNFA…YEDGWLIKMT (83 aa). Lys107 carries the N6-lipoyllysine modification.

The protein belongs to the GcvH family. As to quaternary structure, interacts with GLDC. The glycine cleavage system is composed of four proteins: P (GLDC), T (GCST), L (DLD) and H (GCSH). It depends on (R)-lipoate as a cofactor.

It localises to the mitochondrion. The glycine cleavage system catalyzes the degradation of glycine. The H protein (GCSH) shuttles the methylamine group of glycine from the P protein (GLDC) to the T protein (GCST). Has a pivotal role in the lipoylation of enzymes involved in cellular energetics such as the mitochondrial dihydrolipoyllysine-residue acetyltransferase component of pyruvate dehydrogenase complex (DLAT), and the mitochondrial dihydrolipoyllysine-residue succinyltransferase component of 2-oxoglutarate dehydrogenase complex (DLST). The protein is Glycine cleavage system H protein, mitochondrial of Homo sapiens (Human).